The primary structure comprises 80 residues: Metallothionein-like protein type 2 (80 aa).

The protein belongs to the metallothionein superfamily. Type 15 family.

Metallothioneins have a high content of cysteine residues that bind various heavy metals. The protein is Metallothionein-like protein type 2 (MTI) of Ricinus communis (Castor bean).